Consider the following 635-residue polypeptide: Rab11 family-interacting protein 4 (635 aa).

The 36-residue stretch at 49–84 (GQGEEVEKLVKCLDPNDLGRINFKDFCRGVFAMKGC) folds into the EF-hand domain. Positions 62, 64, 68, and 73 each coordinate Ca(2+). The tract at residues 82–635 (KGCEELLKDV…HNPSILEIKH (554 aa)) is necessary for interaction with RAB11A, subcellular location, homo- or heterooligomerization. Disordered stretches follow at residues 147–176 (GPQE…EKEP) and 216–258 (EDYG…QTPR). Positions 216–225 (EDYGEGDDVD) are enriched in acidic residues. Residues 279 to 615 (KINLLNDLEA…EEINFRLRQY (337 aa)) are a coiled coil. The FIP-RBD domain maps to 572-634 (EAKNLFATQT…DHNPSILEIK (63 aa)).

In terms of assembly, homodimer. Forms a complex with Rab11 (RAB11A or RAB11B) and ARF6. Interacts with RAB11A; the interaction is direct. Forms a heterooligomeric complex with RAB11FIP2, RAB11FIP3 and RAB11FIP5. Interacts with ECPAS. Strongly expressed in the developing retina. Expressed predominantly in neural tissues.

It is found in the recycling endosome membrane. The protein resides in the cleavage furrow. The protein localises to the midbody. It localises to the cytoplasmic vesicle. In terms of biological role, acts as a regulator of endocytic traffic by participating in membrane delivery. Required for the abscission step in cytokinesis, possibly by acting as an 'address tag' delivering recycling endosome membranes to the cleavage furrow during late cytokinesis. May play a role in differentiation during retinal development, in a Rab11-independent manner. This Mus musculus (Mouse) protein is Rab11 family-interacting protein 4 (Rab11fip4).